Consider the following 586-residue polypeptide: Actin-related protein 9 (586 aa).

Residues 141 to 169 form a disordered region; the sequence is STPIVDKDADVDPLQRSTPDDTEPNSEEN.

It belongs to the actin family. ARP8 subfamily.

This Oryza sativa subsp. japonica (Rice) protein is Actin-related protein 9 (ARP9).